We begin with the raw amino-acid sequence, 270 residues long: 4-hydroxy-tetrahydrodipicolinate reductase (270 aa).

NAD(+) contacts are provided by residues 11–16 (GASGRM) and E37. R38 lines the NADP(+) pocket. NAD(+) contacts are provided by residues 101 to 103 (GTT) and 125 to 128 (SPNM). Catalysis depends on H158, which acts as the Proton donor/acceptor. A (S)-2,3,4,5-tetrahydrodipicolinate-binding site is contributed by H159. K162 serves as the catalytic Proton donor. (S)-2,3,4,5-tetrahydrodipicolinate is bound at residue 168-169 (GT).

This sequence belongs to the DapB family.

The protein resides in the cytoplasm. It carries out the reaction (S)-2,3,4,5-tetrahydrodipicolinate + NAD(+) + H2O = (2S,4S)-4-hydroxy-2,3,4,5-tetrahydrodipicolinate + NADH + H(+). The enzyme catalyses (S)-2,3,4,5-tetrahydrodipicolinate + NADP(+) + H2O = (2S,4S)-4-hydroxy-2,3,4,5-tetrahydrodipicolinate + NADPH + H(+). The protein operates within amino-acid biosynthesis; L-lysine biosynthesis via DAP pathway; (S)-tetrahydrodipicolinate from L-aspartate: step 4/4. Functionally, catalyzes the conversion of 4-hydroxy-tetrahydrodipicolinate (HTPA) to tetrahydrodipicolinate. This Shewanella denitrificans (strain OS217 / ATCC BAA-1090 / DSM 15013) protein is 4-hydroxy-tetrahydrodipicolinate reductase.